A 428-amino-acid polypeptide reads, in one-letter code: MNIWKTLLLGMLVTGSAVSAPVELDKVAVIVNDGVILQSDIDTATKTLRANAKKSGQALPDADVLNEQIVDKLIIDTLQTQEADRIGVRIDDTRLNQAIEEIARNNNQTIDELSAAIASEGVSYEEFREQIRKEMAASEARNALVRRRINILPAEVDNLAELLSKETNASVEYRIGHIQLRFTDGQDKSALEAQAKELVEKLKQGADFSTMAYTYSKGPKALQGGDWGWMRKEEMPTIFADQIKMQNKGSIIGPFRSGVGFHILKIEDVKGLETVAVTEVNARHILLKPTVILSDEGAQRELNEFIRRIRAGEATFGELAQQYSQDPGSAAQDGELGYQTPDLYVPEFKHQVETLPVGTISEPFKTVHGWHIVEVLDRREVDRTDSAMKNKAYRILFNRKFNEEVGAWMQELRAGAFVEIINEEENDG.

The signal sequence occupies residues 1-19 (MNIWKTLLLGMLVTGSAVS). PpiC domains lie at 170–268 (SVEY…KIED) and 277–377 (VTEV…EVLD).

The protein localises to the periplasm. The enzyme catalyses [protein]-peptidylproline (omega=180) = [protein]-peptidylproline (omega=0). Its function is as follows. Chaperone involved in the correct folding and assembly of outer membrane proteins. Recognizes specific patterns of aromatic residues and the orientation of their side chains, which are found more frequently in integral outer membrane proteins. May act in both early periplasmic and late outer membrane-associated steps of protein maturation. This chain is Chaperone SurA, found in Vibrio vulnificus (strain YJ016).